A 261-amino-acid polypeptide reads, in one-letter code: Undecaprenyl-diphosphatase 2 (261 aa).

The next 8 helical transmembrane spans lie at 1–21 (MLEALLLGVVEGLTEFLPISS), 38–58 (PGKTYEIVVQLGAILAVCVVF), 75–95 (FAFARNVMVAFLPAAVIGATL), 103–123 (LESPLVAAIALVVGGVAILVI), 138–158 (MSPALALGVGFCQVLAMVPGV), 178–198 (AAEFSFFLAIPTMCGASAYSL), 212–232 (LIALGFVAAFLSALVVVKGFI), and 240–260 (FAPFAWYRIAFGSLMAVLILM).

The protein belongs to the UppP family.

The protein localises to the cell inner membrane. The catalysed reaction is di-trans,octa-cis-undecaprenyl diphosphate + H2O = di-trans,octa-cis-undecaprenyl phosphate + phosphate + H(+). In terms of biological role, catalyzes the dephosphorylation of undecaprenyl diphosphate (UPP). Confers resistance to bacitracin. The sequence is that of Undecaprenyl-diphosphatase 2 from Paramagnetospirillum magneticum (strain ATCC 700264 / AMB-1) (Magnetospirillum magneticum).